The sequence spans 393 residues: Lipoyl synthase, mitochondrial (393 aa).

[4Fe-4S] cluster-binding residues include Cys-111, Cys-116, Cys-122, Cys-142, Cys-146, Cys-149, and Ser-357. In terms of domain architecture, Radical SAM core spans 127-346 (EHGTQTATIM…ETRGNELGFL (220 aa)).

This sequence belongs to the radical SAM superfamily. Lipoyl synthase family. Requires [4Fe-4S] cluster as cofactor.

The protein localises to the mitochondrion. It catalyses the reaction [[Fe-S] cluster scaffold protein carrying a second [4Fe-4S](2+) cluster] + N(6)-octanoyl-L-lysyl-[protein] + 2 oxidized [2Fe-2S]-[ferredoxin] + 2 S-adenosyl-L-methionine + 4 H(+) = [[Fe-S] cluster scaffold protein] + N(6)-[(R)-dihydrolipoyl]-L-lysyl-[protein] + 4 Fe(3+) + 2 hydrogen sulfide + 2 5'-deoxyadenosine + 2 L-methionine + 2 reduced [2Fe-2S]-[ferredoxin]. Its pathway is protein modification; protein lipoylation via endogenous pathway; protein N(6)-(lipoyl)lysine from octanoyl-[acyl-carrier-protein]: step 2/2. In terms of biological role, catalyzes the radical-mediated insertion of two sulfur atoms into the C-6 and C-8 positions of the octanoyl moiety bound to the lipoyl domains of lipoate-dependent enzymes, thereby converting the octanoylated domains into lipoylated derivatives. This is Lipoyl synthase, mitochondrial from Aedes aegypti (Yellowfever mosquito).